A 458-amino-acid polypeptide reads, in one-letter code: Bifunctional protein GlmU (458 aa).

The interval 1-228 is pyrophosphorylase; that stretch reads MHPKLDILIL…DWEVLGVNSK (228 aa). UDP-N-acetyl-alpha-D-glucosamine is bound by residues 10 to 13, K24, Q75, 80 to 81, 102 to 104, G139, E153, N168, and N226; these read LAAG, GT, and YGD. Residue D104 coordinates Mg(2+). N226 lines the Mg(2+) pocket. The interval 229-249 is linker; the sequence is AQLAELERIHQNEVAQRLLAD. The tract at residues 250-458 is N-acetyltransferase; that stretch reads GVTLMDPARL…KRPIKPKKEG (209 aa). Residues R332 and K350 each coordinate UDP-N-acetyl-alpha-D-glucosamine. The Proton acceptor role is filled by H362. Residues Y365 and N376 each coordinate UDP-N-acetyl-alpha-D-glucosamine. Acetyl-CoA is bound by residues A379, 385 to 386, S404, A422, and R439; that span reads NY.

In the N-terminal section; belongs to the N-acetylglucosamine-1-phosphate uridyltransferase family. It in the C-terminal section; belongs to the transferase hexapeptide repeat family. As to quaternary structure, homotrimer. Mg(2+) serves as cofactor.

It localises to the cytoplasm. It carries out the reaction alpha-D-glucosamine 1-phosphate + acetyl-CoA = N-acetyl-alpha-D-glucosamine 1-phosphate + CoA + H(+). It catalyses the reaction N-acetyl-alpha-D-glucosamine 1-phosphate + UTP + H(+) = UDP-N-acetyl-alpha-D-glucosamine + diphosphate. It functions in the pathway nucleotide-sugar biosynthesis; UDP-N-acetyl-alpha-D-glucosamine biosynthesis; N-acetyl-alpha-D-glucosamine 1-phosphate from alpha-D-glucosamine 6-phosphate (route II): step 2/2. Its pathway is nucleotide-sugar biosynthesis; UDP-N-acetyl-alpha-D-glucosamine biosynthesis; UDP-N-acetyl-alpha-D-glucosamine from N-acetyl-alpha-D-glucosamine 1-phosphate: step 1/1. The protein operates within bacterial outer membrane biogenesis; LPS lipid A biosynthesis. In terms of biological role, catalyzes the last two sequential reactions in the de novo biosynthetic pathway for UDP-N-acetylglucosamine (UDP-GlcNAc). The C-terminal domain catalyzes the transfer of acetyl group from acetyl coenzyme A to glucosamine-1-phosphate (GlcN-1-P) to produce N-acetylglucosamine-1-phosphate (GlcNAc-1-P), which is converted into UDP-GlcNAc by the transfer of uridine 5-monophosphate (from uridine 5-triphosphate), a reaction catalyzed by the N-terminal domain. The polypeptide is Bifunctional protein GlmU (Thiobacillus denitrificans (strain ATCC 25259 / T1)).